We begin with the raw amino-acid sequence, 502 residues long: Exodeoxyribonuclease 7 large subunit (502 aa).

Residues 474 to 495 are compositionally biased toward low complexity; it reads SAPSTTKKSAPKPAAPKAPKTP. The tract at residues 474–502 is disordered; it reads SAPSTTKKSAPKPAAPKAPKTPGEQGSLF.

This sequence belongs to the XseA family. Heterooligomer composed of large and small subunits.

The protein localises to the cytoplasm. The enzyme catalyses Exonucleolytic cleavage in either 5'- to 3'- or 3'- to 5'-direction to yield nucleoside 5'-phosphates.. Bidirectionally degrades single-stranded DNA into large acid-insoluble oligonucleotides, which are then degraded further into small acid-soluble oligonucleotides. The protein is Exodeoxyribonuclease 7 large subunit of Ruegeria sp. (strain TM1040) (Silicibacter sp.).